We begin with the raw amino-acid sequence, 169 residues long: Large ribosomal subunit protein uL10 (169 aa).

Belongs to the universal ribosomal protein uL10 family. Part of the ribosomal stalk of the 50S ribosomal subunit. The N-terminus interacts with L11 and the large rRNA to form the base of the stalk. The C-terminus forms an elongated spine to which L12 dimers bind in a sequential fashion forming a multimeric L10(L12)X complex.

Its function is as follows. Forms part of the ribosomal stalk, playing a central role in the interaction of the ribosome with GTP-bound translation factors. This Rickettsia massiliae (strain Mtu5) protein is Large ribosomal subunit protein uL10.